Reading from the N-terminus, the 266-residue chain is Phosphate import ATP-binding protein PstB 2 (266 aa).

The 240-residue stretch at 13–252 (LEAQGVNVYY…GPTEEIFQNP (240 aa)) folds into the ABC transporter domain. ATP is bound at residue 45–52 (GPSGCGKS).

This sequence belongs to the ABC transporter superfamily. Phosphate importer (TC 3.A.1.7) family. As to quaternary structure, the complex is composed of two ATP-binding proteins (PstB), two transmembrane proteins (PstC and PstA) and a solute-binding protein (PstS).

It localises to the cell inner membrane. The enzyme catalyses phosphate(out) + ATP + H2O = ADP + 2 phosphate(in) + H(+). Its function is as follows. Part of the ABC transporter complex PstSACB involved in phosphate import. Responsible for energy coupling to the transport system. The sequence is that of Phosphate import ATP-binding protein PstB 2 from Synechocystis sp. (strain ATCC 27184 / PCC 6803 / Kazusa).